The chain runs to 129 residues: NHP2-like protein 1 homolog (129 aa).

The protein belongs to the eukaryotic ribosomal protein eL8 family.

It localises to the nucleus. Its subcellular location is the nucleolus. Its function is as follows. Binds to the 5'-stem-loop of U4 snRNA and may play a role in the late stage of spliceosome assembly. The protein undergoes a conformational change upon RNA-binding. The sequence is that of NHP2-like protein 1 homolog from Dictyostelium discoideum (Social amoeba).